Consider the following 357-residue polypeptide: Histidine biosynthesis bifunctional protein HisB (357 aa).

The histidinol-phosphatase stretch occupies residues 1–167 (MNDKILFIDR…IHKYLMQNSH (167 aa)). Asp-9 functions as the Nucleophile in the catalytic mechanism. Residues Asp-9 and Asp-11 each coordinate Mg(2+). The active-site Proton donor is Asp-11. Cys-93, His-95, Cys-101, and Cys-103 together coordinate Zn(2+). Asp-130 serves as a coordination point for Mg(2+). The interval 168-357 (RVAHIQRITN…QIPSSKGILL (190 aa)) is imidazoleglycerol-phosphate dehydratase.

In the N-terminal section; belongs to the histidinol-phosphatase family. It in the C-terminal section; belongs to the imidazoleglycerol-phosphate dehydratase family. The cofactor is Mg(2+). Zn(2+) is required as a cofactor.

It is found in the cytoplasm. The enzyme catalyses D-erythro-1-(imidazol-4-yl)glycerol 3-phosphate = 3-(imidazol-4-yl)-2-oxopropyl phosphate + H2O. It carries out the reaction L-histidinol phosphate + H2O = L-histidinol + phosphate. Its pathway is amino-acid biosynthesis; L-histidine biosynthesis; L-histidine from 5-phospho-alpha-D-ribose 1-diphosphate: step 6/9. It participates in amino-acid biosynthesis; L-histidine biosynthesis; L-histidine from 5-phospho-alpha-D-ribose 1-diphosphate: step 8/9. This Blochmanniella floridana protein is Histidine biosynthesis bifunctional protein HisB.